The following is a 113-amino-acid chain: Iron-sulfur cluster insertion protein ErpA (113 aa).

Iron-sulfur cluster contacts are provided by C41, C105, and C107.

It belongs to the HesB/IscA family. In terms of assembly, homodimer. Iron-sulfur cluster is required as a cofactor.

In terms of biological role, required for insertion of 4Fe-4S clusters for at least IspG. The sequence is that of Iron-sulfur cluster insertion protein ErpA from Histophilus somni (strain 129Pt) (Haemophilus somnus).